The sequence spans 424 residues: MDDRLSSQLERYASQVTASATLIIRHLKSLKDEPSTLPSQTSVPTAVGTAQLRLAEAAFQLLHFTRDPGNVLTQLTVDLQVISAVRWLLHFEIFSLVPLEGSISYHELSSVANVPENLLRSHIRLAMTCHLFQESGPIGMVAHSPVSCQLASDPSLVSWGQYFANSVFPTATKNVNATAAWPGSKALNETAHNLAFNHHGSFFDYVSQDPARTVEFANSMKAVSTTSLFDTCHLCKSFDWSSLGDGVVVDMGGSTGHVSIALAESFPSLRFVVQDLPDVVSNSIRQLEERQLPLSVTTRIQFQGHSLLHMQPVKGAAVYLLRQILHDWPDREAVQILRSIVPALGPRSKIFIADIVLPEAGSIPATEEQVMRCNDLLLHQFTNTLERTLEDWQAIVSRVSDNLRIQHVYRDPGSILSLLVIETV.

Aspartate 275 lines the S-adenosyl-L-methionine pocket. Histidine 326 (proton acceptor) is an active-site residue.

It belongs to the class I-like SAM-binding methyltransferase superfamily. Cation-independent O-methyltransferase family.

The protein operates within secondary metabolite biosynthesis. O-methyltransferase; part of the gene cluster that mediates the biosynthesis of aurasperone B, a dimeric gamma-naphthopyrone. The first step in the biosynthesis of aurasperone B is the production of gamma-naphthopyrone precursor YWA1 by the non-reducing polyketide synthase albA, via condensation of one acetyl-CoA starter unit with 6 malonyl-CoA units. YWA1 is then methylated by aunE at position C-6 to yield foncesin which is further methylated at position C-8 by aunD to produce fonsecin B. A key enzyme in the biosynthetic pathway is the cytochrome P450 monooxygenase aunB which catalyzes the oxidative dimerization of fonsecin B to aurasperone B. AunB also catalyzes the oxidative dimerization of rubrofusarin B into aurasperone A. This Aspergillus niger (strain ATCC 1015 / CBS 113.46 / FGSC A1144 / LSHB Ac4 / NCTC 3858a / NRRL 328 / USDA 3528.7) protein is O-methyltransferase aunD.